Here is a 436-residue protein sequence, read N- to C-terminus: 4-hydroxyphenylpyruvate dioxygenase (436 aa).

VOC domains are found at residues 38 to 194 (RFHH…GFEV) and 210 to 370 (RLDH…IFTK). Fe cation is bound by residues His213, His295, and Glu381.

Belongs to the 4HPPD family. Fe cation is required as a cofactor.

The protein resides in the cytoplasm. It carries out the reaction 3-(4-hydroxyphenyl)pyruvate + O2 = homogentisate + CO2. It participates in amino-acid degradation; L-phenylalanine degradation; acetoacetate and fumarate from L-phenylalanine: step 3/6. The protein operates within cofactor biosynthesis; prenylquinone biosynthesis. This Plectranthus scutellarioides (Coleus) protein is 4-hydroxyphenylpyruvate dioxygenase.